The chain runs to 279 residues: Energy-coupling factor transporter ATP-binding protein EcfA1 (279 aa).

In terms of domain architecture, ABC transporter spans 5-240 (ITVNNLFFKY…GNRLISLGLD (236 aa)). 40–47 (GHNGSGKS) is a binding site for ATP.

This sequence belongs to the ABC transporter superfamily. Energy-coupling factor EcfA family. As to quaternary structure, forms a stable energy-coupling factor (ECF) transporter complex composed of 2 membrane-embedded substrate-binding proteins (S component), 2 ATP-binding proteins (A component) and 2 transmembrane proteins (T component).

The protein localises to the cell membrane. Its function is as follows. ATP-binding (A) component of a common energy-coupling factor (ECF) ABC-transporter complex. Unlike classic ABC transporters this ECF transporter provides the energy necessary to transport a number of different substrates. This chain is Energy-coupling factor transporter ATP-binding protein EcfA1, found in Streptococcus agalactiae serotype Ia (strain ATCC 27591 / A909 / CDC SS700).